The chain runs to 494 residues: Glycogen synthase (494 aa).

Lys15 contributes to the ADP-alpha-D-glucose binding site.

Belongs to the glycosyltransferase 1 family. Bacterial/plant glycogen synthase subfamily.

It carries out the reaction [(1-&gt;4)-alpha-D-glucosyl](n) + ADP-alpha-D-glucose = [(1-&gt;4)-alpha-D-glucosyl](n+1) + ADP + H(+). It functions in the pathway glycan biosynthesis; glycogen biosynthesis. Its function is as follows. Synthesizes alpha-1,4-glucan chains using ADP-glucose. This is Glycogen synthase from Paramagnetospirillum magneticum (strain ATCC 700264 / AMB-1) (Magnetospirillum magneticum).